Consider the following 368-residue polypeptide: Nuclease EXOG, mitochondrial (368 aa).

The transit peptide at 1–41 directs the protein to the mitochondrion; that stretch reads MAIKSIASRLRGSRRFLSGFVAGAVVGAAGAGLAALQFFRS. His140 functions as the Proton acceptor in the catalytic mechanism. A divalent metal cation is bound at residue Asn171.

It belongs to the DNA/RNA non-specific endonuclease family. Homodimer. The cofactor is a divalent metal cation. Ubiquitous.

It localises to the mitochondrion inner membrane. In terms of biological role, endo/exonuclease with nicking activity towards supercoiled DNA, a preference for single-stranded DNA and 5'-3' exonuclease activity. This chain is Nuclease EXOG, mitochondrial (EXOG), found in Homo sapiens (Human).